We begin with the raw amino-acid sequence, 201 residues long: Large ribosomal subunit protein uL4 (201 aa).

Residues 44–71 (RAQKTRAEVTGSGKKPWRQKGTGRARSG) form a disordered region.

It belongs to the universal ribosomal protein uL4 family. As to quaternary structure, part of the 50S ribosomal subunit.

Functionally, one of the primary rRNA binding proteins, this protein initially binds near the 5'-end of the 23S rRNA. It is important during the early stages of 50S assembly. It makes multiple contacts with different domains of the 23S rRNA in the assembled 50S subunit and ribosome. Its function is as follows. Forms part of the polypeptide exit tunnel. The chain is Large ribosomal subunit protein uL4 from Pectobacterium carotovorum subsp. carotovorum (strain PC1).